A 313-amino-acid polypeptide reads, in one-letter code: GTP cyclohydrolase MptA (313 aa).

This sequence belongs to the GTP cyclohydrolase IV family. As to quaternary structure, homodimer. Fe(2+) is required as a cofactor.

The catalysed reaction is GTP + H2O = 7,8-dihydroneopterin 2',3'-cyclic phosphate + formate + diphosphate + H(+). It participates in cofactor biosynthesis; 5,6,7,8-tetrahydromethanopterin biosynthesis. Converts GTP to 7,8-dihydro-D-neopterin 2',3'-cyclic phosphate, the first intermediate in the biosynthesis of coenzyme methanopterin. This is GTP cyclohydrolase MptA from Methanosphaera stadtmanae (strain ATCC 43021 / DSM 3091 / JCM 11832 / MCB-3).